The primary structure comprises 518 residues: Cytochrome P450 monooxygenase ARMGADRAFT_1018417 (518 aa).

A helical membrane pass occupies residues 3 to 23; it reads LFSAYALAFSLLMIPLILYIL. Residue Cys433 coordinates heme. Asn455 carries an N-linked (GlcNAc...) asparagine glycan.

Belongs to the cytochrome P450 family. Heme is required as a cofactor.

It is found in the membrane. The protein operates within secondary metabolite biosynthesis. Functionally, cytochrome P450 monooxygenase, part of the gene cluster that mediates the biosynthesis of melleolides, a range of antifungal and phytotoxic polyketide derivatives composed of an orsellinic acid (OA) moiety esterified to various sesquiterpene alcohols. The first step in melleolides biosynthesis is performed by the delta(6)-protoilludene synthase PRO1 which catalyzes the cyclization of farnesyl diphosphate to protoilludene. The orsellinic acid synthase armB produces OA by condensing acetyl-CoA with 3 malonyl-CoA units in a three-round chain elongation reaction folowed by a C2-C7 ring closure. ArmB further catalyzes the trans-esterification of OA to the various sesquiterpene alcohols resulting from the hydroxylation of protoilludene. The melleolides cluster also includes 5 cytochrome P450 monooxygenases, 4 NAD(+)-dependent oxidoreductases, one flavin-dependent oxidoreductase, and one O-methyltransferase. The cytochrome P450 monooxygenases may be involved in protoilludene hydroxylation to elaborate melleolides with multiple alcohol groups, such as melleolide D, which carries alcohol functionalities at C-4, C-5, C-10, and C-13. The role of the NAD(+)-dependent enzymes remains unknown. Numerous melleolides, including arnamial, show 5'-O-methylation of the aromatic moiety which may be catalyzed by the methyltransferase encoded in the cluster. The flavin-dependent oxidoreductase might represent the dehydrogenase yielding the aldehyde in position 1 of arnamial and other melleolides. Finally, several halogenase localized outside of the cluster, are able to catalyze the transfer of a single chlorine atom to the melleolide backbone, resulting in a 6'-chloromelleolide product. This is Cytochrome P450 monooxygenase ARMGADRAFT_1018417 from Armillaria gallica (Bulbous honey fungus).